Reading from the N-terminus, the 173-residue chain is NADH-quinone oxidoreductase subunit I 1 (173 aa).

2 4Fe-4S ferredoxin-type domains span residues 41–73 (IVLT…LAKA) and 83–112 (EHFR…LTPD). Positions 53, 56, 59, 63, 92, 95, 98, and 102 each coordinate [4Fe-4S] cluster.

The protein belongs to the complex I 23 kDa subunit family. NDH-1 is composed of 14 different subunits. Subunits NuoA, H, J, K, L, M, N constitute the membrane sector of the complex. Requires [4Fe-4S] cluster as cofactor.

It is found in the cell inner membrane. It catalyses the reaction a quinone + NADH + 5 H(+)(in) = a quinol + NAD(+) + 4 H(+)(out). NDH-1 shuttles electrons from NADH, via FMN and iron-sulfur (Fe-S) centers, to quinones in the respiratory chain. The immediate electron acceptor for the enzyme in this species is believed to be ubiquinone. Couples the redox reaction to proton translocation (for every two electrons transferred, four hydrogen ions are translocated across the cytoplasmic membrane), and thus conserves the redox energy in a proton gradient. This Rhodopseudomonas palustris (strain BisA53) protein is NADH-quinone oxidoreductase subunit I 1.